The following is a 316-amino-acid chain: Porphobilinogen deaminase (316 aa).

S-(dipyrrolylmethanemethyl)cysteine is present on C249.

The protein belongs to the HMBS family. In terms of assembly, monomer. It depends on dipyrromethane as a cofactor.

The catalysed reaction is 4 porphobilinogen + H2O = hydroxymethylbilane + 4 NH4(+). It functions in the pathway porphyrin-containing compound metabolism; protoporphyrin-IX biosynthesis; coproporphyrinogen-III from 5-aminolevulinate: step 2/4. In terms of biological role, tetrapolymerization of the monopyrrole PBG into the hydroxymethylbilane pre-uroporphyrinogen in several discrete steps. In Nitrobacter hamburgensis (strain DSM 10229 / NCIMB 13809 / X14), this protein is Porphobilinogen deaminase.